We begin with the raw amino-acid sequence, 224 residues long: Small ribosomal subunit protein uS3 (224 aa).

The region spanning 20–89 (LDEFLANYFK…NVNITVSPVP (70 aa)) is the KH type-2 domain.

The protein belongs to the universal ribosomal protein uS3 family. As to quaternary structure, part of the 30S ribosomal subunit.

Binds the lower part of the 30S subunit head. This is Small ribosomal subunit protein uS3 from Staphylothermus marinus (strain ATCC 43588 / DSM 3639 / JCM 9404 / F1).